The sequence spans 211 residues: Minor capsid protein VP2 (211 aa).

This sequence belongs to the norovirus VP2 family. In terms of assembly, homooligomer. The portal-like structure consists in 12 copies of VP2. Interacts with capsid protein VP1.

It localises to the virion. The protein localises to the host cytoplasm. Functionally, minor structural protein that forms a portal-like structure at a unique three-fold axis of symmetry, following binding to the host receptor. The channel formed by VP2 may allow the delivery of the viral genome through the host endosomal membrane. The protein is Minor capsid protein VP2 of Homo sapiens (Human).